Here is a 398-residue protein sequence, read N- to C-terminus: Isopenicillin N epimerase (398 aa).

The residue at position 219 (K219) is an N6-(pyridoxal phosphate)lysine. The tract at residues P243 to G264 is disordered. Positions P251 to G264 are enriched in basic and acidic residues.

It belongs to the class-V pyridoxal-phosphate-dependent aminotransferase family. The cofactor is pyridoxal 5'-phosphate.

The catalysed reaction is isopenicillin N = penicillin N. Its pathway is antibiotic biosynthesis; cephalosporin C biosynthesis. In terms of biological role, catalyzes the reversible isomerization between isopenicillin N and penicillin N. In Amycolatopsis lactamdurans (Nocardia lactamdurans), this protein is Isopenicillin N epimerase (cefD).